Here is a 91-residue protein sequence, read N- to C-terminus: Alpha-defensin-related sequence 10 (91 aa).

Positions 1-19 are cleaved as a signal peptide; it reads MKKLVLLSAFVLLAFQVQA. Residues 20–65 constitute a propeptide that is removed on maturation; sequence DSIQNTDEETKTEEQPGEENQAMSVSFGDPEGSALQDAAVGMARPC. Positions 21-52 are disordered; sequence SIQNTDEETKTEEQPGEENQAMSVSFGDPEGS. A run of 7 repeats spans residues 65-67, 68-70, 71-73, 74-76, 77-79, 80-82, and 83-85. A 7 X 3 AA tandem repeats of C-P-X region spans residues 65-85; that stretch reads CPPCPSCPSCPWCPMCPRCPS.

It belongs to the alpha-defensin family. Paneth cells of the small bowel.

The protein localises to the secreted. Functionally, apparent precursor of a secreted, cationic, proline- and cysteine-rich peptide that contains Cys-Pro-Xaa repeats. Unlike cryptdin, the proposed mature peptide region lacks the structural motif characteristic of defensins. It may have microbicidal activities. The protein is Alpha-defensin-related sequence 10 (Defa-rs10) of Mus musculus (Mouse).